A 174-amino-acid chain; its full sequence is Dual-action ribosomal maturation protein DarP (174 aa).

It belongs to the DarP family.

The protein localises to the cytoplasm. Member of a network of 50S ribosomal subunit biogenesis factors which assembles along the 30S-50S interface, preventing incorrect 23S rRNA structures from forming. Promotes peptidyl transferase center (PTC) maturation. The protein is Dual-action ribosomal maturation protein DarP of Vibrio atlanticus (strain LGP32) (Vibrio splendidus (strain Mel32)).